The sequence spans 311 residues: Acetyl-coenzyme A carboxylase carboxyl transferase subunit alpha (311 aa).

The 251-residue stretch at 36–286 folds into the CoA carboxyltransferase C-terminal domain; the sequence is KLEKEVEKTF…KEYFIKSLAE (251 aa).

This sequence belongs to the AccA family. In terms of assembly, acetyl-CoA carboxylase is a heterohexamer composed of biotin carboxyl carrier protein (AccB), biotin carboxylase (AccC) and two subunits each of ACCase subunit alpha (AccA) and ACCase subunit beta (AccD).

It localises to the cytoplasm. It catalyses the reaction N(6)-carboxybiotinyl-L-lysyl-[protein] + acetyl-CoA = N(6)-biotinyl-L-lysyl-[protein] + malonyl-CoA. It functions in the pathway lipid metabolism; malonyl-CoA biosynthesis; malonyl-CoA from acetyl-CoA: step 1/1. Its function is as follows. Component of the acetyl coenzyme A carboxylase (ACC) complex. First, biotin carboxylase catalyzes the carboxylation of biotin on its carrier protein (BCCP) and then the CO(2) group is transferred by the carboxyltransferase to acetyl-CoA to form malonyl-CoA. In Aliarcobacter butzleri (strain RM4018) (Arcobacter butzleri), this protein is Acetyl-coenzyme A carboxylase carboxyl transferase subunit alpha.